The chain runs to 30 residues: Rothein 3.3 (30 aa).

The residue at position 30 (leucine 30) is a Leucine amide.

Expressed by the skin dorsal glands.

The protein resides in the secreted. In terms of biological role, lacks antimicrobial activity. Does not inhibit the formation of NO by neuronal nitric oxide. The polypeptide is Rothein 3.3 (Litoria rothii (Roth's tree frog)).